The following is a 487-amino-acid chain: NAD-dependent histone deacetylase HST3 (487 aa).

The Deacetylase sirtuin-type domain maps to 15–336 (PADTSIKLHE…FLTQEQLDSE (322 aa)). Residues 40-59 (GAGI…DGLY) and 129-132 (QNID) contribute to the NAD(+) site. His167 acts as the Proton acceptor in catalysis. 4 residues coordinate Zn(2+): Cys175, Cys178, Cys200, and Cys203. NAD(+) contacts are provided by residues 261–263 (GTS), 291–293 (NKT), and Cys312. The segment covering 397-406 (VESVSVKEEP) has biased composition (basic and acidic residues). The interval 397–487 (VESVSVKEEP…ARKGITLDQH (91 aa)) is disordered. The span at 415 to 425 (HKPKQATKLKR) shows a compositional bias: basic residues. The segment covering 448 to 459 (DQLSSPASSING) has biased composition (polar residues).

It belongs to the sirtuin family. Class I subfamily. Zn(2+) serves as cofactor.

Its subcellular location is the cytoplasm. The protein localises to the nucleus. The enzyme catalyses N(6)-acetyl-L-lysyl-[protein] + NAD(+) + H2O = 2''-O-acetyl-ADP-D-ribose + nicotinamide + L-lysyl-[protein]. Its function is as follows. NAD-dependent histone deacetylase, which could function in telomeric silencing, cell cycle progression and chromosome stability. The protein is NAD-dependent histone deacetylase HST3 (HST3) of Candida albicans (strain SC5314 / ATCC MYA-2876) (Yeast).